The primary structure comprises 253 residues: ER membrane protein complex subunit 3 (253 aa).

3 helical membrane-spanning segments follow: residues 10–30 (WVLLPISIVMVLTGVLKQYIM), 126–146 (FIPQTIIMWWVNHFFAGFILM), and 176–196 (SISWYFISVLGLNPVYNLIGL).

It belongs to the EMC3 family. Component of the ER membrane protein complex (EMC), which is composed of EMC1, EMC2, EMC3, EMC4, EMC5 and EMC6.

It is found in the endoplasmic reticulum membrane. Functionally, the EMC seems to be required for efficient folding of proteins in the endoplasmic reticulum (ER). This Saccharomyces cerevisiae (strain YJM789) (Baker's yeast) protein is ER membrane protein complex subunit 3 (AIM27).